Here is a 370-residue protein sequence, read N- to C-terminus: Serine O-succinyltransferase (370 aa).

Positions 46 to 355 (AILIVTGLSP…PQGHDAFLVD (310 aa)) constitute an AB hydrolase-1 domain. An important for substrate specificity region spans residues 52–55 (GLSP). The Nucleophile role is filled by S149. Substrate is bound at residue R218. Residues D316 and H349 contribute to the active site. Residue D350 participates in substrate binding.

The protein belongs to the AB hydrolase superfamily. MetX family. Homodimer.

The protein resides in the cytoplasm. The enzyme catalyses succinyl-CoA + L-serine = O-succinyl-L-serine + CoA. The catalysed reaction is L-homoserine + succinyl-CoA = O-succinyl-L-homoserine + CoA. The protein operates within amino-acid biosynthesis; L-cysteine biosynthesis; L-cysteine from L-serine: step 1/2. Transfers a succinyl group from succinyl-CoA to L-serine, forming succinyl-L-serine. In vitro, also has homoserine succinyl transferase activity. This chain is Serine O-succinyltransferase, found in Stenotrophomonas maltophilia (Pseudomonas maltophilia).